A 374-amino-acid polypeptide reads, in one-letter code: MTEHAILVLEDGTVFEGDAVGANGLSVGEVVFNTALTGYQEILTDPSYAYQLVTLTYPHIGNTGCTDQDDEANKVWAAGLIVRDVPRRPSNWRSQISLSDWLAARGVVAIAGIDTRKLTRILREKGAQHGALMAGEIDVGKAQDAAHQFAGIKGMDLAKVVSTKQGYSWYEGQLDLDRNECKRAAPQYKVVAYDYGVKLNILRMLAERGCDLTVVPAQTPADEVLALCPDGVFLSNGPGDPEPCDYAVAAIKTFIMRRVPIFGICLGHQLLAQAVGARVVKMSHGHHGANHPVQDLRSGRVMITSQNHGFAVDEATLPNNVRVTHRSLFDGTNQGIELLDVPAFSFQGHPEASPGPHDVDVLFDRFITMMAAQS.

Positions 1–186 (MTEHAILVLE…DRNECKRAAP (186 aa)) are CPSase. Residues serine 47, glycine 237, and glycine 239 each coordinate L-glutamine. The region spanning 189-374 (KVVAYDYGVK…RFITMMAAQS (186 aa)) is the Glutamine amidotransferase type-1 domain. The active-site Nucleophile is the cysteine 265. Leucine 266, glutamine 269, asparagine 307, glycine 309, and phenylalanine 310 together coordinate L-glutamine. Catalysis depends on residues histidine 349 and glutamate 351.

It belongs to the CarA family. Composed of two chains; the small (or glutamine) chain promotes the hydrolysis of glutamine to ammonia, which is used by the large (or ammonia) chain to synthesize carbamoyl phosphate. Tetramer of heterodimers (alpha,beta)4.

It catalyses the reaction hydrogencarbonate + L-glutamine + 2 ATP + H2O = carbamoyl phosphate + L-glutamate + 2 ADP + phosphate + 2 H(+). The enzyme catalyses L-glutamine + H2O = L-glutamate + NH4(+). It participates in amino-acid biosynthesis; L-arginine biosynthesis; carbamoyl phosphate from bicarbonate: step 1/1. The protein operates within pyrimidine metabolism; UMP biosynthesis via de novo pathway; (S)-dihydroorotate from bicarbonate: step 1/3. Its function is as follows. Small subunit of the glutamine-dependent carbamoyl phosphate synthetase (CPSase). CPSase catalyzes the formation of carbamoyl phosphate from the ammonia moiety of glutamine, carbonate, and phosphate donated by ATP, constituting the first step of 2 biosynthetic pathways, one leading to arginine and/or urea and the other to pyrimidine nucleotides. The small subunit (glutamine amidotransferase) binds and cleaves glutamine to supply the large subunit with the substrate ammonia. This is Carbamoyl phosphate synthase small chain from Xylella fastidiosa (strain Temecula1 / ATCC 700964).